Consider the following 25-residue polypeptide: Hemocyanin subunit 3 (25 aa).

It belongs to the tyrosinase family. Hemocyanin subfamily. As to expression, hemolymph.

It localises to the secreted. The protein localises to the extracellular space. Functionally, hemocyanins are copper-containing oxygen carriers occurring freely dissolved in the hemolymph of many mollusks and arthropods. This chain is Hemocyanin subunit 3, found in Maja squinado (Mediterranean spider crab).